The sequence spans 314 residues: Putative SET domain-containing protein L222 (314 aa).

Residues 23-172 (EYIQVIYQNP…ANTEITISYG (150 aa)) form the SET domain.

This sequence belongs to the class V-like SAM-binding methyltransferase superfamily.

The polypeptide is Putative SET domain-containing protein L222 (Acanthamoeba polyphaga mimivirus (APMV)).